The primary structure comprises 191 residues: MVPGPNTLFVLKNSVSSGMKGGYLAACGVFIGDAVLMFLAWAGVATLIKTTPILFNIVRYLGAFYLLYLESKILYATLKGKNNEAKSDEPQYGAIFKRALILSLTNPKAILFYVSFFVQFIDVNAPHTGISFFILATTLELVSFCYLSFLIISGAFVTQYIRTKKKLAKVGNSLIGLMFVGFAARLATLQS.

A run of 5 helical transmembrane segments spans residues 28–48 (GVFIGDAVLMFLAWAGVATLI), 50–70 (TTPILFNIVRYLGAFYLLYLE), 101–121 (ILSLTNPKAILFYVSFFVQFI), 132–152 (FFILATTLELVSFCYLSFLII), and 167–187 (LAKVGNSLIGLMFVGFAARLA).

It belongs to the Rht family.

Its subcellular location is the cell inner membrane. The catalysed reaction is L-leucine(in) + H(+)(out) = L-leucine(out) + H(+)(in). Exporter of leucine. The protein is Putative leucine efflux protein (leuE) of Shigella boydii serotype 4 (strain Sb227).